The primary structure comprises 156 residues: Small ribosomal subunit protein uS7 (156 aa).

It belongs to the universal ribosomal protein uS7 family. As to quaternary structure, part of the 30S ribosomal subunit. Contacts proteins S9 and S11.

Its function is as follows. One of the primary rRNA binding proteins, it binds directly to 16S rRNA where it nucleates assembly of the head domain of the 30S subunit. Is located at the subunit interface close to the decoding center, probably blocks exit of the E-site tRNA. In Bacillus pumilus (strain SAFR-032), this protein is Small ribosomal subunit protein uS7.